Consider the following 627-residue polypeptide: Pentatricopeptide repeat-containing protein At2g15630, mitochondrial (627 aa).

A mitochondrion-targeting transit peptide spans 1–29; it reads MRRFTVPCILRHRISILSGAGYSPAAARL. 13 PPR repeats span residues 154 to 188, 189 to 223, 224 to 258, 259 to 293, 294 to 324, 326 to 360, 361 to 395, 396 to 430, 431 to 465, 466 to 500, 501 to 535, 536 to 570, and 571 to 605; these read STIL…GFYP, KTET…EIKS, NVYT…GIKP, TIVT…GFQP, DMQT…IGLV, DSVS…GMVP, TFYT…GIVL, DSVT…GIQP, TQFT…GMKP, DLVM…SINP, DDVT…GIKP, DHIS…GFNP, and TLLT…GIVP.

Belongs to the PPR family. P subfamily.

Its subcellular location is the mitochondrion. The protein is Pentatricopeptide repeat-containing protein At2g15630, mitochondrial of Arabidopsis thaliana (Mouse-ear cress).